The chain runs to 369 residues: Zeaxanthin 7,8(7',8')-cleavage dioxygenase, chromoplastic (369 aa).

Residues His-62, His-112, His-177, and His-356 each contribute to the Fe cation site.

It belongs to the carotenoid oxygenase family. Fe(2+) serves as cofactor. In terms of tissue distribution, in the style branches.

Its subcellular location is the plastid. The protein resides in the chromoplast. The catalysed reaction is all-trans-zeaxanthin + 2 O2 = crocetin dialdehyde + 2 3beta-hydroxy-beta-cyclocitral. Functionally, cleaves zeaxanthin symmetrically at the 7-8 and 7'-8' double bonds to produce crocetin dialdehyde and hydroxy-beta-cyclocitral, two water-soluble precursors sequestred in vacuoles and involved in the synthesis of saffron pigment and aroma. The polypeptide is Zeaxanthin 7,8(7',8')-cleavage dioxygenase, chromoplastic (ZCD) (Crocus sativus (Saffron)).